Reading from the N-terminus, the 164-residue chain is CDP-archaeol synthase (164 aa).

4 helical membrane-spanning segments follow: residues 3–23 (LTVF…AVFA), 55–75 (AIGI…YHVI), 77–97 (VFDA…GAFI), and 122–142 (FLVY…AVVI).

It belongs to the CDP-archaeol synthase family. Mg(2+) serves as cofactor.

Its subcellular location is the cell membrane. It carries out the reaction 2,3-bis-O-(geranylgeranyl)-sn-glycerol 1-phosphate + CTP + H(+) = CDP-2,3-bis-O-(geranylgeranyl)-sn-glycerol + diphosphate. Its pathway is membrane lipid metabolism; glycerophospholipid metabolism. Catalyzes the formation of CDP-2,3-bis-(O-geranylgeranyl)-sn-glycerol (CDP-archaeol) from 2,3-bis-(O-geranylgeranyl)-sn-glycerol 1-phosphate (DGGGP) and CTP. This reaction is the third ether-bond-formation step in the biosynthesis of archaeal membrane lipids. The polypeptide is CDP-archaeol synthase (Pyrobaculum aerophilum (strain ATCC 51768 / DSM 7523 / JCM 9630 / CIP 104966 / NBRC 100827 / IM2)).